The following is a 510-amino-acid chain: Nectin-4 (510 aa).

Residues 1–31 form the signal peptide; it reads MPLSLGAEMWGPAAWLLLLLLLASFTGQRLA. Residues 32-144 form the Ig-like V-type domain; it reads GELETSDLVT…GSFQARLRLR (113 aa). Topologically, residues 32–349 are extracellular; that stretch reads GELETSDLVT…GKQVDLVSAS (318 aa). 3 disulfide bridges follow: Cys52-Cys127, Cys171-Cys223, and Cys270-Cys315. 2 Ig-like C2-type domains span residues 148 to 237 and 248 to 331; these read PPLP…QRIT and ASVR…VVVD. Asn281 carries N-linked (GlcNAc...) asparagine glycosylation. A helical membrane pass occupies residues 350-370; it reads VVVVGVIAALLFCLLVVVVVL. Over 371 to 510 the chain is Cytoplasmic; the sequence is MSRYHRRKAQ…IYINGRGHLV (140 aa). Over residues 400-412 the composition is skewed to basic and acidic residues; the sequence is RLHSHHSDPRNQP. The tract at residues 400-475 is disordered; sequence RLHSHHSDPR…GRAEEEEDRD (76 aa).

It belongs to the nectin family. As to quaternary structure, self-associates. Interacts via its Ig-like V-type domain with NECTIN1 Ig-like V-type domain. Interacts via its C-terminus with AFDN. Interacts with TIGIT.

It localises to the cell membrane. The protein localises to the cell junction. Its subcellular location is the adherens junction. Seems to be involved in cell adhesion through trans-homophilic and -heterophilic interactions, the latter including specifically interactions with NECTIN1. Plays a role in the senescence-associated cell size enlargement via SFK/PI3K/Rac1 and thus promotes senescent cell survival. Also participates in the innate immune response by acting as a ligand for the receptor TIGIT to inhibit NK-cell activity. In Bos taurus (Bovine), this protein is Nectin-4.